A 1022-amino-acid polypeptide reads, in one-letter code: Collagen alpha-2(VI) chain (1022 aa).

Residues 1–27 (MSRRTAEMFQQAFLSTLLCVALVPLHA) form the signal peptide. A nonhelical region region spans residues 28–255 (QFDDEPVTSC…CYKMTCLEIA (228 aa)). The VWFA 1 domain maps to 44–168 (PISVYFVIDT…VITDGHVTGS (125 aa)). N-linked (GlcNAc...) asparagine glycosylation is found at asparagine 141 and asparagine 215. The segment at 256–590 (GPAGPKGYRG…PGPPGDPGLT (335 aa)) is triple-helical region. The disordered stretch occupies residues 263-587 (YRGQKGAKGN…EGTPGPPGDP (325 aa)). The segment covering 287–299 (DPGIEGPIGYPGP) has biased composition (low complexity). Basic and acidic residues predominate over residues 306-318 (KGEKGEIGSDGRR). An N-linked (GlcNAc...) asparagine glycan is attached at asparagine 327. 2 consecutive short sequence motifs (cell attachment site) follow at residues 348 to 350 (RGD) and 366 to 368 (RGD). Residues 363–377 (QGERGDEGMKGDPGR) are compositionally biased toward basic and acidic residues. Residues 389-399 (EKGSPGIPGNP) are compositionally biased toward low complexity. 5 short sequence motifs (cell attachment site) span residues 426 to 428 (RGD), 444 to 446 (RGD), 465 to 467 (RGD), 489 to 491 (RGD), and 498 to 500 (RGD). The segment at 514–519 (GFSYPG) is interruption in collagenous region. A compositionally biased stretch (gly residues) spans 534-543 (GPKGGRGELG). Positions 591–1022 (DCDVMTYVRE…FFDRFIRWIC (432 aa)) are nonhelical region. VWFA domains follow at residues 613-738 (ALDI…YDPR) and 833-957 (DIVF…ITGS). N-linked (GlcNAc...) asparagine glycans are attached at residues asparagine 630 and asparagine 897.

The protein belongs to the type VI collagen family. As to quaternary structure, trimers composed of three different chains: alpha 1(VI), alpha 2(VI), and alpha 3(VI). Prolines at the third position of the tripeptide repeating unit (G-X-Y) are hydroxylated in some or all of the chains.

It is found in the secreted. The protein resides in the extracellular space. Its subcellular location is the extracellular matrix. Its function is as follows. Collagen VI acts as a cell-binding protein. The polypeptide is Collagen alpha-2(VI) chain (COL6A2) (Gallus gallus (Chicken)).